The chain runs to 95 residues: Pyrimidine/purine nucleoside phosphorylase (95 aa).

It belongs to the nucleoside phosphorylase PpnP family.

It carries out the reaction a purine D-ribonucleoside + phosphate = a purine nucleobase + alpha-D-ribose 1-phosphate. It catalyses the reaction adenosine + phosphate = alpha-D-ribose 1-phosphate + adenine. The catalysed reaction is cytidine + phosphate = cytosine + alpha-D-ribose 1-phosphate. The enzyme catalyses guanosine + phosphate = alpha-D-ribose 1-phosphate + guanine. It carries out the reaction inosine + phosphate = alpha-D-ribose 1-phosphate + hypoxanthine. It catalyses the reaction thymidine + phosphate = 2-deoxy-alpha-D-ribose 1-phosphate + thymine. The catalysed reaction is uridine + phosphate = alpha-D-ribose 1-phosphate + uracil. The enzyme catalyses xanthosine + phosphate = alpha-D-ribose 1-phosphate + xanthine. Catalyzes the phosphorolysis of diverse nucleosides, yielding D-ribose 1-phosphate and the respective free bases. Can use uridine, adenosine, guanosine, cytidine, thymidine, inosine and xanthosine as substrates. Also catalyzes the reverse reactions. The protein is Pyrimidine/purine nucleoside phosphorylase of Edwardsiella ictaluri (strain 93-146).